A 523-amino-acid chain; its full sequence is Leucine-rich repeat-containing protein 27 (523 aa).

Positions Met1–Asp26 are disordered. Residues Lys12 to Asp26 are compositionally biased toward basic and acidic residues. 5 LRR repeats span residues Ser55 to Pro76, Asn77 to Leu98, Asn101 to His122, His124 to Val145, and Thr147 to Lys168. 2 disordered regions span residues Gln206–Phe236 and Arg372–Met394. Basic and acidic residues-rich tracts occupy residues Asp227–Phe236 and Arg372–Ser385. 2 coiled-coil regions span residues Val335–Gln374 and Met463–Lys494. Positions Gly503–Ser523 are disordered. Residues Gln513–Ser523 show a composition bias toward polar residues.

In Mus musculus (Mouse), this protein is Leucine-rich repeat-containing protein 27 (Lrrc27).